The sequence spans 378 residues: MDSLAAPQDRLVEQLLSPRTQAQRRLKDIDKQYVGFATLPNQVHRKSVKKGFDFTLMVAGESGLGKSTLVHSLFLTDLYKDRKLLSAEERISQTVEILKHTVDIEEKGVKLKLTIVDTPGFGDAVDNTECWKPITDYVDQQFEQYFRDESGLNRKNIQDNRVHCCLYFISPFGHGLRPVDVGFMKALHEKVNIVPLIAKADCLVPSEIRKLKERIREEIDKFGIHVYQFPECDSDEDEDFKQQDRELKESAPFAVIGSNTVVEAKGQRVRGRLYPWGIVEVENQAHCDFVKLRNMLIRTHMHDLKDVTCDVHYENYRAHCIQQMTSKLTQDSRMESPIPILPLPTPDAETEKLIRMKDEELRRMQEMLQRMKQQMQDQ.

Residues 50 to 323 (KGFDFTLMVA…ENYRAHCIQQ (274 aa)) form the Septin-type G domain. A G1 motif region spans residues 60-67 (GESGLGKS). GTP-binding positions include 60 to 67 (GESGLGKS), Thr94, and Gly120. The interval 117–120 (DTPG) is G3 motif. At Arg177 the chain carries Omega-N-methylarginine. Residues 198–201 (AKAD) form a G4 motif region. GTP is bound at residue 199–207 (KADCLVPSE). Ser234 carries the phosphoserine modification. Residues Gly257 and Arg272 each contribute to the GTP site. The residue at position 336 (Ser336) is a Phosphoserine. The residue at position 345 (Thr345) is a Phosphothreonine. Residues 347 to 378 (DAETEKLIRMKDEELRRMQEMLQRMKQQMQDQ) are a coiled coil.

Belongs to the TRAFAC class TrmE-Era-EngA-EngB-Septin-like GTPase superfamily. Septin GTPase family. Septins polymerize into heterooligomeric protein complexes that form filaments, and can associate with cellular membranes, actin filaments and microtubules. GTPase activity is required for filament formation. Interacts with SEPTIN2 and SEPTIN5. In platelets, associated with a complex containing STX4. Interacts with PRKN; this interaction leads to SEPTIN5 ubiquitination and degradation. Interacts with DYRK1A. Interacts with STX1A; in the cerebellar cortex. Post-translationally, phosphorylated by DYRK1A.

It localises to the cytoplasm. The protein resides in the cytoskeleton. In terms of biological role, filament-forming cytoskeletal GTPase. May play a role in cytokinesis (Potential). May play a role in platelet secretion. This chain is Septin-5, found in Macaca fascicularis (Crab-eating macaque).